A 544-amino-acid polypeptide reads, in one-letter code: Cytochrome P450 monooxygenase tenB (544 aa).

The chain crosses the membrane as a helical span at residues 13 to 33; sequence LGYYEKVTGILGVVSIILLFW. Basic and acidic residues predominate over residues 438–448; it reads FDPFRFSRASK. Positions 438-467 are disordered; it reads FDPFRFSRASKDDDDDDDDDGRSTSSHTKD. Cysteine 486 serves as a coordination point for heme.

This sequence belongs to the cytochrome P450 family. Heme is required as a cofactor.

The protein resides in the membrane. The protein operates within secondary metabolite biosynthesis. Cytochrome P450 monooxygenase; part of the gene cluster that mediates the biosynthesis of tenellin-type 2-pyridones, iron-chelating compounds involved in iron stress tolerance, competition with the natural competitor fungus Metarhizium robertsii and insect hosts infection. TenB catalyzes the selective N-hydroxylation of the 2-pyridone nitrogen of yield tellinin and 15-hydroxytellenin (15-HT), respectively. The pathway begins with the assembly of the polyketide-amino acid backbone by the hybrid PKS-NRPS tenS with the help of the enoyl reductase tenC. These enzymes catalyze the synthesis of the pyrrolidine-2-dione intermediates pretellinin A, 11-hydropretellenin A, 12-hydropretellenin A, 13-hydropretellenin A, 14-hydropretellenin A, 12-oxopretellenin A and prototellinin D. The cytochrome P450 monooxygenase tenA then catalyzes an oxidative ring expansion of pretenellin A and 14-hydropretellenin A to form the 2-pyridone core, leading to pretenellin B and pyridovericin, respectively. The cytochrome P450 monooxygenase tenB is then required for the selective N-hydroxylation of the 2-pyridone nitrogen of yield tellinin and 15-hydroxytellenin (15-HT), respectively. The UDP-glucosyltransferase GT1 and the methyltransferase MT1, located outside the tenS gene cluster, contribute to the stepwise glycosylation and methylation of 15-HT to obtain the glycoside pyridovericin-N-O-(4-O-methyl-beta-D-glucopyranoside) (PMGP). Additional related compounds such as 1-O-methyl-15-HT, (8Z)-1-O-methyl-15-HT, and O-methyltenellin A are also produced but the enzymes involved in their biosynthesis have still to be determined. In Beauveria bassiana (strain ARSEF 2860) (White muscardine disease fungus), this protein is Cytochrome P450 monooxygenase tenB.